The primary structure comprises 217 residues: Ribonuclease T (217 aa).

In terms of domain architecture, Exonuclease spans 20 to 195 (VVVDVETAGF…YDTEKTAELF (176 aa)). Residues D23, E25, H182, and D187 each contribute to the Mg(2+) site. H182 functions as the Proton donor/acceptor in the catalytic mechanism.

The protein belongs to the RNase T family. In terms of assembly, homodimer. Requires Mg(2+) as cofactor.

Trims short 3' overhangs of a variety of RNA species, leaving a one or two nucleotide 3' overhang. Responsible for the end-turnover of tRNA: specifically removes the terminal AMP residue from uncharged tRNA (tRNA-C-C-A). Also appears to be involved in tRNA biosynthesis. The sequence is that of Ribonuclease T from Vibrio vulnificus (strain CMCP6).